We begin with the raw amino-acid sequence, 413 residues long: Cardiolipin synthase B (413 aa).

PLD phosphodiesterase domains are found at residues 108-135 and 285-312; these read VFRRMHRKIVVIDARIAFIGGLNYSSEH and RRRPLHGKVALMDDHWATVGSSNLDPLS. Catalysis depends on residues histidine 113, lysine 115, aspartate 120, histidine 290, lysine 292, and aspartate 297. The disordered stretch occupies residues 388–413; the sequence is TQVDPPAQPTMETQDRVETENTGVNP.

Belongs to the phospholipase D family. Cardiolipin synthase subfamily. ClsB sub-subfamily.

It localises to the cell membrane. It carries out the reaction 2 a 1,2-diacyl-sn-glycero-3-phospho-(1'-sn-glycerol) = a cardiolipin + glycerol. Its function is as follows. Catalyzes the phosphatidyl group transfer from one phosphatidylglycerol molecule to another to form cardiolipin (CL) (diphosphatidylglycerol) and glycerol. This Shigella flexneri protein is Cardiolipin synthase B.